The primary structure comprises 322 residues: Aldo-keto reductase family 1 member C13 (322 aa).

Residues 20-24 and Asp50 contribute to the NAD(+) site; that span reads GFGTY. Tyr55 functions as the Proton donor in the catalytic mechanism. His117 lines the substrate pocket. NAD(+) contacts are provided by residues 166 to 167, Gln190, 216 to 224, and 270 to 280; these read SN, FGALGTQRY, and QSFYESEMKEN.

Belongs to the aldo/keto reductase family. As to quaternary structure, monomer. Post-translationally, the N-terminus is blocked.

It catalyses the reaction morphine + NAD(+) = morphinone + NADH + H(+). It carries out the reaction morphine + NADP(+) = morphinone + NADPH + H(+). Strongly inhibited by sulfhydryl reagents and ketamine, but not by pyrazole, barbital and indomethacine. In terms of biological role, catalyzes the dehydrogenation of morphine to morphinone. The enzyme also exhibits significant activity for a variety of cyclic and alicyclic alcohols. In addition to xenobiotics, the enzyme catalyzes the dehydrogenation of 17-beta-hydroxysteroids with much higher affinities than morphine. Uses both NAD and NADP, but the activity is much greater with NAD than with NADP. This is Aldo-keto reductase family 1 member C13 (AKR1C13) from Mesocricetus auratus (Golden hamster).